The following is a 122-amino-acid chain: Large ribosomal subunit protein bL12 (122 aa).

Belongs to the bacterial ribosomal protein bL12 family. In terms of assembly, homodimer. Part of the ribosomal stalk of the 50S ribosomal subunit. Forms a multimeric L10(L12)X complex, where L10 forms an elongated spine to which 2 to 4 L12 dimers bind in a sequential fashion. Binds GTP-bound translation factors.

Its function is as follows. Forms part of the ribosomal stalk which helps the ribosome interact with GTP-bound translation factors. Is thus essential for accurate translation. This chain is Large ribosomal subunit protein bL12, found in Blochmanniella pennsylvanica (strain BPEN).